The chain runs to 143 residues: Monothiol glutaredoxin-5, mitochondrial (143 aa).

Residues 1–28 (MFGRISTRALLRPAFTHRIPSVSLSRFL) constitute a mitochondrion transit peptide. The region spanning 33–138 (KQAIESAIES…KLLEDADALV (106 aa)) is the Glutaredoxin domain. K50 lines the glutathione pocket. Residue C58 participates in [2Fe-2S] cluster binding. Glutathione-binding positions include 90–94 (REGVK), I102, and 115–116 (CD).

It belongs to the glutaredoxin family. Monothiol subfamily. In terms of assembly, homodimer.

Its subcellular location is the mitochondrion matrix. Its function is as follows. Monothiol glutaredoxin involved in mitochondrial iron-sulfur (Fe/S) cluster transfer. Receives iron-sulfur clusters from scaffold protein ISU1 and mediates their transfer to apoproteins, to the 4Fe/FS cluster biosynthesis machinery, or export from mitochondrion. The sequence is that of Monothiol glutaredoxin-5, mitochondrial (GRX5) from Lachancea kluyveri (Yeast).